We begin with the raw amino-acid sequence, 218 residues long: Phosphoribosylformylglycinamidine synthase subunit PurQ (218 aa).

The region spanning 2–218 (SIAVLRFPGT…GARMLRGLAC (217 aa)) is the Glutamine amidotransferase type-1 domain. The active-site Nucleophile is the cysteine 86. Catalysis depends on residues histidine 195 and glutamate 197.

In terms of assembly, part of the FGAM synthase complex composed of 1 PurL, 1 PurQ and 2 PurS subunits.

The protein resides in the cytoplasm. It catalyses the reaction N(2)-formyl-N(1)-(5-phospho-beta-D-ribosyl)glycinamide + L-glutamine + ATP + H2O = 2-formamido-N(1)-(5-O-phospho-beta-D-ribosyl)acetamidine + L-glutamate + ADP + phosphate + H(+). The enzyme catalyses L-glutamine + H2O = L-glutamate + NH4(+). It functions in the pathway purine metabolism; IMP biosynthesis via de novo pathway; 5-amino-1-(5-phospho-D-ribosyl)imidazole from N(2)-formyl-N(1)-(5-phospho-D-ribosyl)glycinamide: step 1/2. Part of the phosphoribosylformylglycinamidine synthase complex involved in the purines biosynthetic pathway. Catalyzes the ATP-dependent conversion of formylglycinamide ribonucleotide (FGAR) and glutamine to yield formylglycinamidine ribonucleotide (FGAM) and glutamate. The FGAM synthase complex is composed of three subunits. PurQ produces an ammonia molecule by converting glutamine to glutamate. PurL transfers the ammonia molecule to FGAR to form FGAM in an ATP-dependent manner. PurS interacts with PurQ and PurL and is thought to assist in the transfer of the ammonia molecule from PurQ to PurL. This Wolinella succinogenes (strain ATCC 29543 / DSM 1740 / CCUG 13145 / JCM 31913 / LMG 7466 / NCTC 11488 / FDC 602W) (Vibrio succinogenes) protein is Phosphoribosylformylglycinamidine synthase subunit PurQ.